Reading from the N-terminus, the 752-residue chain is Two pore channel protein 2 (752 aa).

Residues 1-84 (MAEPQAESEP…RRYYSNVCQR (84 aa)) lie on the Cytoplasmic side of the membrane. Residues 85–105 (TLSFTIFLILFLAFIETPSSL) traverse the membrane as a helical segment. Topologically, residues 106–127 (TSTADVRYRAAPWEPPCGLTES) are extracellular. A helical transmembrane segment spans residues 128–148 (VEVLCLLVFAADLSVKGYLFG). At 149-155 (WAHFQKN) the chain is on the cytoplasmic side. A helical membrane pass occupies residues 156-176 (LWLLGYLVVLVVSLVDWTVSL). The Extracellular portion of the chain corresponds to 177-183 (SLVCHEP). A helical membrane pass occupies residues 184 to 204 (LRIRRLLRPFFLLQNSSMMKK). The interaction with phosphatidylinositol 3,5-bisphosphate stretch occupies residues 203–207 (KKTLK). Residues 205 to 218 (TLKCIRWSLPEMAS) are Cytoplasmic-facing. A helical membrane pass occupies residues 219 to 239 (VGLLLAIHLCLFTMFGMLLFA). Residues 240-254 (GGKQDDGQDRERLTY) lie on the Extracellular side of the membrane. Residues 255–279 (FQNLPESLTSLLVLLTTANNPDVMI) constitute an intramembrane region (helical; Pore-forming). The Extracellular portion of the chain corresponds to 280–289 (PAYSKNRAYA). Residues 290–310 (IFFIVFTVIGSLFLMNLLTAI) form a helical membrane-spanning segment. The Cytoplasmic portion of the chain corresponds to 311-436 (IYSQFRGYLM…FLFGHYYFDY (126 aa)). Residues 437-459 (LGNLIALANLVSICVFLVLDADV) traverse the membrane as a helical segment. The Extracellular segment spans residues 460–465 (LPAERD). Residues 466 to 486 (DFILGILNCVFIVYYLLEMLL) form a helical membrane-spanning segment. The Cytoplasmic portion of the chain corresponds to 487-502 (KVFALGLRGYLSYPSN). The chain crosses the membrane as a helical span at residues 503 to 523 (VFDGLLTVVLLVLEISTLAVY). Residues 524–554 (RLPHPGWRPEMVGLLSLWDMTRMLNMLIVFR) are Extracellular-facing. A helical membrane pass occupies residues 555–575 (FLRIIPSMKLMAVVASTVLGL). Residues 576-580 (VQNMR) lie on the Cytoplasmic side of the membrane. The helical transmembrane segment at 581-601 (AFGGILVVVYYVFAIIGINLF) threads the bilayer. At 602–635 (RGVIVALPGNSSLAPANGSAPCGSFEQLEYWANN) the chain is on the extracellular side. N-linked (GlcNAc...) asparagine glycosylation is found at Asn611 and Asn618. Positions 636-658 (FDDFAAALVTLWNLMVVNNWQVF) form an intramembrane region, helical; Pore-forming. The Extracellular segment spans residues 659 to 673 (LDAYRRYSGPWSKIY). Residues 674–694 (FVLWWLVSSVIWVNLFLALIL) form a helical membrane-spanning segment. The Cytoplasmic portion of the chain corresponds to 695-752 (ENFLHKWDPRSHLQPLAGTPEATYQMTVELLFRDILEEPGEDELTERLSQHPHLWLCR).

Belongs to the calcium channel alpha-1 subunit (TC 1.A.1.11) family. Two pore calcium channel subfamily. Homodimer. Interacts with LRRK2. Interacts with HAX1. Interacts with MTOR; the interaction is required for TPCN2 ATP sensitivity. Found in a complex with LSM12, TPCN1 and TPCN2. Interacts with LSM12. In terms of processing, N-glycosylated. As to expression, widely expressed. Expressed at high level in liver and kidney.

It localises to the late endosome membrane. The protein resides in the lysosome membrane. The protein localises to the melanosome membrane. The enzyme catalyses Na(+)(in) = Na(+)(out). It catalyses the reaction Ca(2+)(in) = Ca(2+)(out). Regulated by Mg(2+) ions, cytosolic Mg(2+) selectively inhibits outward current while lysosomal Mg(2+) modestly inhibits both the outward and inward currents. In the absence of Mg(2+), NAADP readily activates TPCN2, with properties similar to PI(3,5)P2. Na(+) current is inhibited by ATP in a MTORC-dependent manner. ATP sensitivity is independent of PI(3,5)P2. Both current elicited by PI(3,5)P2 as well as NAADP are inhibited by tetrandrine. Functionally, intracellular channel initially characterized as a non-selective Ca(2+)-permeable channel activated by NAADP (nicotinic acid adenine dinucleotide phosphate), it is also a highly-selective Na(+) channel activated directly by PI(3,5)P2 (phosphatidylinositol 3,5-bisphosphate). Localizes to the lysosomal and late endosome membranes where it regulates organellar membrane excitability, membrane trafficking, and pH homeostasis. Is associated with a plethora of physiological processes, including mTOR-dependent nutrient sensing, skin pigmentation and autophagy. Ion selectivity is not fixed but rather agonist-dependent and under defined ionic conditions, can be readily activated by both NAADP and PI(3,5)P2. As calcium channel, it increases the pH in the lysosomal lumen, as sodium channel, it promotes lysosomal exocytosis. Plays a crucial role in endolysosomal trafficking in the endolysosomal degradation pathway and is potentially involved in the homeostatic control of many macromolecules and cell metabolites. Also expressed in melanosomes of pigmented cells where mediates a Ca(2+) channel and/or PI(3,5)P2-activated melanosomal Na(+) channel to acidify pH and inhibit tyrosinase activity required for melanogenesis and pigmentation. Unlike the voltage-dependent TPCN1, TPCN2 is voltage independent and can be activated solely by PI(3,5)P2 binding. In contrast, PI(4,5)P2, PI(3,4)P2, PI(3)P and PI(5)P have no obvious effect on channel activation. (Microbial infection) During Ebola virus (EBOV) infection, controls the movement of endosomes containing virus particles and is required by EBOV to escape from the endosomal network into the cell cytoplasm. In terms of biological role, (Microbial infection) Required for cell entry of coronaviruses SARS-CoV and SARS-CoV-2, as well as human coronavirus EMC (HCoV-EMC), by endocytosis. This is Two pore channel protein 2 from Homo sapiens (Human).